The primary structure comprises 365 residues: Chorismate synthase (365 aa).

NADP(+) contacts are provided by R48 and R54. FMN-binding positions include 131–133, 243–244, G288, 303–307, and R329; these read RSS, NA, and KPTSS.

It belongs to the chorismate synthase family. In terms of assembly, homotetramer. It depends on FMNH2 as a cofactor.

It carries out the reaction 5-O-(1-carboxyvinyl)-3-phosphoshikimate = chorismate + phosphate. It participates in metabolic intermediate biosynthesis; chorismate biosynthesis; chorismate from D-erythrose 4-phosphate and phosphoenolpyruvate: step 7/7. Its function is as follows. Catalyzes the anti-1,4-elimination of the C-3 phosphate and the C-6 proR hydrogen from 5-enolpyruvylshikimate-3-phosphate (EPSP) to yield chorismate, which is the branch point compound that serves as the starting substrate for the three terminal pathways of aromatic amino acid biosynthesis. This reaction introduces a second double bond into the aromatic ring system. This chain is Chorismate synthase, found in Sinorhizobium medicae (strain WSM419) (Ensifer medicae).